The sequence spans 728 residues: NF-kappa-B inhibitor zeta (728 aa).

The disordered stretch occupies residues 45 to 107 (GAGDTGYLSA…PHMGVGRQQR (63 aa)). Over residues 53-82 (SAVPSAPGSPGSDSSDFSSTSSVSSCGAVE) the composition is skewed to low complexity. Basic and acidic residues predominate over residues 83 to 96 (SRPRGGARAERPQV). Residues 107-129 (RGPFQGVRVKNSVKELLLHIRSN) form the OCA domain. The Nuclear localization signal signature appears at 163–178 (KRKGPDPLSDGPVCKR). Polar residues-rich tracts occupy residues 241–250 (PTVPQNSPRD) and 268–288 (QPFQ…YQYS). Residues 241-334 (PTVPQNSPRD…SQSPKYDSNL (94 aa)) are disordered. Positions 303–315 (QQQHQQNYPHNSP) are enriched in low complexity. The segment covering 316 to 330 (LQFSPYSRMSQSPKY) has biased composition (polar residues). The required for transcriptional activity stretch occupies residues 329–403 (KYDSNLFDTH…VGVHDVGSHS (75 aa)). The tract at residues 414–728 (MGSPMNTTQL…KSIQQRAPPY (315 aa)) is interaction with NFKB1/p50. 7 ANK repeats span residues 453–482 (DGDT…ALHM), 489–518 (NGQS…QVNT), 522–551 (WGRT…RSNQ), 561–589 (DGLT…SHSP), 591–617 (VQDL…AVEA), 622–651 (SGRT…CLSF), and 658–691 (NGNT…DPST).

As to quaternary structure, interacts with NFKB1/p50. Interacts with RELA. Interacts with AKIRIN2. In terms of tissue distribution, expressed in kidney, liver, lung and heart. Expressed at very low levels in skeletal muscle, spleen and brain.

It is found in the nucleus. In terms of biological role, involved in regulation of NF-kappa-B transcription factor complexes. Inhibits NF-kappa-B activity without affecting its nuclear translocation upon stimulation. Inhibits DNA-binding of RELA and NFKB1/p50, and of the NF-kappa-B p65-p50 heterodimer and the NF-kappa-B p50-p50 homodimer. Also seems to activate NF-kappa-B-mediated transcription. In vitro, upon association with NFKB1/p50 has transcriptional activation activity and, together with NFKB1/p50 and RELA, is recruited to LCN2 promoters. Promotes transcription of LCN2 and DEFB4. Is recruited to IL-6 promoters and activates IL-6 but decreases TNF-alpha production in response to LPS. Seems to be involved in the induction of inflammatory genes activated through TLR/IL-1 receptor signaling. Involved in the induction of T helper 17 cells (Th17) differentiation upon recognition of antigen by T cell antigen receptor (TCR). This is NF-kappa-B inhibitor zeta (Nfkbiz) from Mus musculus (Mouse).